We begin with the raw amino-acid sequence, 90 residues long: Mitochondrial import inner membrane translocase subunit Tim8 A (90 aa).

Positions 36–59 (CWDKCMDKPGPKLDSRAEMCFVNC) match the Twin CX3C motif motif. 2 disulfides stabilise this stretch: C36/C59 and C40/C55.

The protein belongs to the small Tim family. Heterohexamer; composed of 3 copies of TIMM8A and 3 copies of TIMM13, named soluble 70 kDa complex. Associates with the TIM22 complex, whose core is composed of TIMM22.

The protein localises to the mitochondrion inner membrane. Functionally, mitochondrial intermembrane chaperone that participates in the import and insertion of some multi-pass transmembrane proteins into the mitochondrial inner membrane. Also required for the transfer of beta-barrel precursors from the TOM complex to the sorting and assembly machinery (SAM complex) of the outer membrane. Acts as a chaperone-like protein that protects the hydrophobic precursors from aggregation and guide them through the mitochondrial intermembrane space. The TIMM8-TIMM13 complex mediates the import of some proteins while the predominant TIMM9-TIMM10 70 kDa complex mediates the import of much more proteins. The polypeptide is Mitochondrial import inner membrane translocase subunit Tim8 A (timm8a) (Takifugu rubripes (Japanese pufferfish)).